The following is a 215-amino-acid chain: Ribose-5-phosphate isomerase A (215 aa).

Substrate-binding positions include 26–29, 79–82, and 92–95; these read TGST, DGAD, and KGGG. Catalysis depends on glutamate 101, which acts as the Proton acceptor. Residue lysine 119 participates in substrate binding.

It belongs to the ribose 5-phosphate isomerase family. In terms of assembly, homodimer.

It catalyses the reaction aldehydo-D-ribose 5-phosphate = D-ribulose 5-phosphate. The protein operates within carbohydrate degradation; pentose phosphate pathway; D-ribose 5-phosphate from D-ribulose 5-phosphate (non-oxidative stage): step 1/1. Its function is as follows. Catalyzes the reversible conversion of ribose-5-phosphate to ribulose 5-phosphate. The polypeptide is Ribose-5-phosphate isomerase A (Xylella fastidiosa (strain Temecula1 / ATCC 700964)).